Here is a 331-residue protein sequence, read N- to C-terminus: Fructose-1,6-bisphosphatase class 1 (331 aa).

4 residues coordinate Mg(2+): Glu100, Asp120, Leu122, and Asp123. Substrate is bound by residues 123-126 (DGSS), Asn216, Tyr243, 261-263 (YLY), and Lys273. Glu279 contributes to the Mg(2+) binding site.

The protein belongs to the FBPase class 1 family. As to quaternary structure, homotetramer. It depends on Mg(2+) as a cofactor.

The protein resides in the cytoplasm. The catalysed reaction is beta-D-fructose 1,6-bisphosphate + H2O = beta-D-fructose 6-phosphate + phosphate. Its pathway is carbohydrate biosynthesis; gluconeogenesis. This is Fructose-1,6-bisphosphatase class 1 from Amoebophilus asiaticus (strain 5a2).